A 155-amino-acid chain; its full sequence is Cyanate hydratase (155 aa).

Catalysis depends on residues R92, E95, and S118.

It belongs to the cyanase family.

The enzyme catalyses cyanate + hydrogencarbonate + 3 H(+) = NH4(+) + 2 CO2. In terms of biological role, catalyzes the reaction of cyanate with bicarbonate to produce ammonia and carbon dioxide. The protein is Cyanate hydratase of Mycobacterium avium (strain 104).